Here is a 51-residue protein sequence, read N- to C-terminus: ATP synthase F(1) complex subunit epsilon, mitochondrial (51 aa).

N6-acetyllysine; alternate occurs at positions 21, 32, and 37. N6-succinyllysine; alternate is present on residues Lys21, Lys32, and Lys37. The residue at position 44 (Lys44) is an N6-acetyllysine.

It belongs to the eukaryotic ATPase epsilon family. Component of the ATP synthase complex composed at least of ATP5F1A/subunit alpha, ATP5F1B/subunit beta, ATP5MC1/subunit c (homooctomer), MT-ATP6/subunit a, MT-ATP8/subunit 8, ATP5ME/subunit e, ATP5MF/subunit f, ATP5MG/subunit g, ATP5MK/subunit k, ATP5MJ/subunit j, ATP5F1C/subunit gamma, ATP5F1D/subunit delta, ATP5F1E/subunit epsilon, ATP5PF/subunit F6, ATP5PB/subunit b, ATP5PD/subunit d, ATP5PO/subunit OSCP. ATP synthase complex consists of a soluble F(1) head domain (subunits alpha(3) and beta(3)) - the catalytic core - and a membrane F(0) domain - the membrane proton channel (subunits c, a, 8, e, f, g, k and j). These two domains are linked by a central stalk (subunits gamma, delta, and epsilon) rotating inside the F1 region and a stationary peripheral stalk (subunits F6, b, d, and OSCP).

It localises to the mitochondrion. It is found in the mitochondrion inner membrane. Subunit epsilon, of the mitochondrial membrane ATP synthase complex (F(1)F(0) ATP synthase or Complex V) that produces ATP from ADP in the presence of a proton gradient across the membrane which is generated by electron transport complexes of the respiratory chain. ATP synthase complex consist of a soluble F(1) head domain - the catalytic core - and a membrane F(1) domain - the membrane proton channel. These two domains are linked by a central stalk rotating inside the F(1) region and a stationary peripheral stalk. During catalysis, ATP synthesis in the catalytic domain of F(1) is coupled via a rotary mechanism of the central stalk subunits to proton translocation. In vivo, can only synthesize ATP although its ATP hydrolase activity can be activated artificially in vitro. May be essential for the assembly of F(1) and may play an important role in the incorporation of the hydrophobic subunit c into the F(1)-c oligomer rotor of the mitochondrial ATP synthase complex. In Rattus norvegicus (Rat), this protein is ATP synthase F(1) complex subunit epsilon, mitochondrial.